Here is a 388-residue protein sequence, read N- to C-terminus: Succinate--CoA ligase [ADP-forming] subunit beta (388 aa).

The ATP-grasp domain maps to 9–244 (KEIFRSMGVA…LEEEDPKEIE (236 aa)). ATP-binding positions include lysine 46, 53 to 55 (GRG), glutamate 99, cysteine 102, and glutamate 107. The Mg(2+) site is built by asparagine 199 and aspartate 213. Substrate-binding positions include asparagine 264 and 321–323 (GIM).

The protein belongs to the succinate/malate CoA ligase beta subunit family. In terms of assembly, heterotetramer of two alpha and two beta subunits. It depends on Mg(2+) as a cofactor.

It carries out the reaction succinate + ATP + CoA = succinyl-CoA + ADP + phosphate. It catalyses the reaction GTP + succinate + CoA = succinyl-CoA + GDP + phosphate. The protein operates within carbohydrate metabolism; tricarboxylic acid cycle; succinate from succinyl-CoA (ligase route): step 1/1. Succinyl-CoA synthetase functions in the citric acid cycle (TCA), coupling the hydrolysis of succinyl-CoA to the synthesis of either ATP or GTP and thus represents the only step of substrate-level phosphorylation in the TCA. The beta subunit provides nucleotide specificity of the enzyme and binds the substrate succinate, while the binding sites for coenzyme A and phosphate are found in the alpha subunit. The protein is Succinate--CoA ligase [ADP-forming] subunit beta of Staphylococcus aureus (strain MRSA252).